Consider the following 255-residue polypeptide: Indole-3-glycerol phosphate synthase (255 aa).

It belongs to the TrpC family.

The enzyme catalyses 1-(2-carboxyphenylamino)-1-deoxy-D-ribulose 5-phosphate + H(+) = (1S,2R)-1-C-(indol-3-yl)glycerol 3-phosphate + CO2 + H2O. It functions in the pathway amino-acid biosynthesis; L-tryptophan biosynthesis; L-tryptophan from chorismate: step 4/5. The chain is Indole-3-glycerol phosphate synthase (trpC) from Priestia megaterium (strain ATCC 12872 / QMB1551) (Bacillus megaterium).